Reading from the N-terminus, the 597-residue chain is Serine/arginine repetitive matrix protein 3 (597 aa).

Over residues 1–31 the composition is skewed to polar residues; that stretch reads MSSTVNNGAASMQSTPDAANGFPQPSSSSGT. Residues 1-47 are disordered; it reads MSSTVNNGAASMQSTPDAANGFPQPSSSSGTWPRAEEELRAAEPGLV. The CWF21 domain maps to 55–98; the sequence is LDHERKRRVELKCMELQEMMEEQGYSEEEIRQKVGTFRQMLMEK. Residues 99 to 109 show a composition bias toward basic and acidic residues; that stretch reads EGVLTREDRPG. Positions 99-597 are disordered; sequence EGVLTREDRP…GPAPLPPPAA (499 aa). 4 stretches are compositionally biased toward basic residues: residues 149-158, 168-186, 199-211, and 219-243; these read RGHRGYRTKH, PKKKKKKKGGHRRSRKKRR, LRKKKKSVKKHRR, and RRKRRHRSRSSKCKRKEKNKEKKRP. 2 stretches are compositionally biased toward low complexity: residues 257–278 and 291–313; these read SGSSHSPSLSSHYSDSRSPSRL and SQRSSGSRSPSPSGGSGWGSPQR. Gly residues-rich tracts occupy residues 315-328 and 374-383; these read GGSGQRSGAHGGRP and GRGGRAAGGA. Residues 384 to 412 are compositionally biased toward basic residues; the sequence is GRRRRRRRRRRRSRSSASAPRRRGRRRPR. Composition is skewed to low complexity over residues 417 to 433, 466 to 476, and 488 to 507; these read RGSSRSLSRARSSSDSG, RPASTSPSPGA, and SSRSPGPHPRSWSSSRSPSK. Positions 530–549 are enriched in basic and acidic residues; that stretch reads LSRDKDGEGRARHSEAEATR. The span at 550-565 shows a compositional bias: basic residues; the sequence is ARRRSRSYSPIRKRRR.

Belongs to the CWC21 family. In terms of tissue distribution, expressed in breast cancer cell lines.

In terms of biological role, may play a role in regulating breast cancer cell invasiveness. May be involved in RYBP-mediated breast cancer progression. The sequence is that of Serine/arginine repetitive matrix protein 3 (SRRM3) from Homo sapiens (Human).